The chain runs to 631 residues: Forkhead box protein O1 (631 aa).

Pro residues predominate over residues 1-11; it reads MAEAPQPPPPL. Disordered stretches follow at residues 1 to 57, 90 to 147, 223 to 324, and 372 to 404; these read MAEA…PAAG, DIRQ…SRRN, SSWW…MPEQ, and PNSS…PNSE. Low complexity-rich tracts occupy residues 37–48 and 100–135; these read NPSSSANSSPAP and QQQQ…PLGA. Residues 149-243 constitute a DNA-binding region (fork-head); the sequence is WGNLSYADLI…KNGKSPRRRA (95 aa). Positions 253–264 are enriched in basic residues; it reads AKSRGRAAKKKA. Positions 265–282 are enriched in low complexity; that stretch reads SMQSSQDGSSDSPGSQFS. 2 stretches are compositionally biased toward polar residues: residues 303–315 and 381–403; these read RPRT…TISG and ASMM…SPNS.

Phosphorylated by AKT1; insulin-induced. In terms of processing, IGF1 rapidly induces phosphorylation of Thr-28, Ser-245 and Ser-308. Phosphorylation of Ser-245 decreases DNA-binding activity and promotes the phosphorylation of Thr-28, and Ser-308, which leads to nuclear exclusion and loss of function. Phosphorylation of Ser-318 is independent of IGF1 and leads to reduced function. As to expression, localized to the animal hemisphere during early cleavage stages. At early tadpole stages, expressed in the branchial arches, pronephros and liver. Within the head, expressed in the forming thyroid gland and in head mesenchyme anterior to the eyes.

It localises to the cytoplasm. Its subcellular location is the nucleus. Transcription factor that regulates metabolic homeostasis in response to oxidative stress. Binds to the consensus sequence 5'-TT[G/A]TTTTG-3' and the related Daf-16 family binding element (DBE) with consensus sequence 5'-TT[G/A]TTTAC-3'. Main regulator of redox balance and osteoblast numbers and controls bone mass. Orchestrates the endocrine function of the skeleton in regulating glucose metabolism. Also acts as a key regulator of chondrogenic commitment of skeletal progenitor cells in response to lipid availability: when lipids levels are low, translocates to the nucleus and promotes expression of sox9, which induces chondrogenic commitment and suppresses fatty acid oxidation. Acts synergistically with atf4 to suppress osteocalcin/bglap activity, increasing glucose levels and triggering glucose intolerance and insulin insensitivity. Also suppresses the transcriptional activity of runx2, an upstream activator of osteocalcin/bglap. May act as a positive regulator of apoptosis in cardiac smooth muscle cells as a result of its transcriptional activation of pro-apoptotic genes. This Xenopus laevis (African clawed frog) protein is Forkhead box protein O1.